We begin with the raw amino-acid sequence, 124 residues long: Fluoride-specific ion channel FluC 2 (124 aa).

4 helical membrane passes run 9 to 29, 34 to 54, 67 to 87, and 99 to 119; these read LGIFLAAMLGGLVRYLVSTWL, DFPWGTLFVNYLGIFCLIYLV, LILALGTGFCGGLTTFSSLML, and LSLILYLLLSIGGGLLLAYYL. Residues glycine 77 and threonine 80 each coordinate Na(+).

It belongs to the fluoride channel Fluc/FEX (TC 1.A.43) family.

It is found in the cell membrane. The catalysed reaction is fluoride(in) = fluoride(out). Na(+) is not transported, but it plays an essential structural role and its presence is essential for fluoride channel function. Functionally, fluoride-specific ion channel. Important for reducing fluoride concentration in the cell, thus reducing its toxicity. The polypeptide is Fluoride-specific ion channel FluC 2 (Streptococcus pneumoniae serotype 4 (strain ATCC BAA-334 / TIGR4)).